A 308-amino-acid chain; its full sequence is tRNA pseudouridine synthase B (308 aa).

Aspartate 44 acts as the Nucleophile in catalysis.

Belongs to the pseudouridine synthase TruB family. Type 1 subfamily.

It carries out the reaction uridine(55) in tRNA = pseudouridine(55) in tRNA. Functionally, responsible for synthesis of pseudouridine from uracil-55 in the psi GC loop of transfer RNAs. This is tRNA pseudouridine synthase B from Bdellovibrio bacteriovorus (strain ATCC 15356 / DSM 50701 / NCIMB 9529 / HD100).